The primary structure comprises 1262 residues: Protein stoned-B (1262 aa).

Short sequence motifs (NPF) lie at residues 3 to 5, 19 to 21, 33 to 35, and 43 to 45; these read NPF. Residues 17 to 36 form a disordered region; it reads AANPFLMQSEPEPSSDNPFM. The segment at 49 to 189 is disordered; that stretch reads ADDLELGAEP…DVSVDSGSSA (141 aa). Residues 50–60 show a composition bias toward acidic residues; sequence DDLELGAEPEA. Positions 101-111 are enriched in low complexity; that stretch reads PPQSQPQLQSH. Pro residues predominate over residues 115-124; it reads HPPPPRPLVP. The segment covering 128–145 has biased composition (polar residues); the sequence is TQDLISTVSSQLDETSSE. Residues 172–189 show a composition bias toward low complexity; sequence DSGLADLLDVSVDSGSSA. Residues 210 to 212 carry the NPF 5 motif; the sequence is NPF. Disordered regions lie at residues 225 to 452 and 474 to 507; these read VPLP…SPPT and EEMD…NFAP. Residues 233 to 272 show a composition bias toward pro residues; the sequence is KQPPRPPPPRPAPPRPAPPGQAAPQRPPPPLAAVNPPPAA. Acidic residues predominate over residues 325–345; sequence DLDETIGEGEPPEQEEPDTEQ. The segment covering 384-401 has biased composition (polar residues); it reads QVNNMAAPSGTASTQRAT. The segment covering 417-429 has biased composition (acidic residues); sequence DDEDEPEAMQEPE. The NPF 6 signature appears at 493–495; the sequence is NPF. Phosphoserine is present on residues serine 623 and serine 626. A disordered region spans residues 643 to 709; it reads SGVAPQLAPP…QDTPQTPLYD (67 aa). The NPF 7 motif lies at 673-675; the sequence is NPF. In terms of domain architecture, SHD spans 728–902; it reads GWEMQLRQPN…KIPALRERAL (175 aa). The interval 847–1108 is interaction with Syt; it reads KEFGSDLKKL…KGIERILGAV (262 aa). The MHD domain occupies 906-1219; it reads MEEVQVTAVD…ARHEYKVGIE (314 aa). The disordered stretch occupies residues 1226-1262; the sequence is TNAYLAATRPIREEPPTTATKPTASPVAPSDSDTDSN. The span at 1241–1254 shows a compositional bias: low complexity; sequence PTTATKPTASPVAP.

Belongs to the Stoned B family. As to quaternary structure, interacts with the second C2 domain of Syt.

It localises to the cytoplasm. The protein localises to the synapse. Adapter protein involved in endocytic recycling of synaptic vesicles membranes. May act by mediating the retrieval of synaptotagmin protein Syt from the plasma membrane, thereby facilitating the internalization of multiple synaptic vesicles from the plasma membrane. The protein is Protein stoned-B (stnB) of Drosophila melanogaster (Fruit fly).